The primary structure comprises 681 residues: Transferrin (681 aa).

The N-terminal stretch at 1-18 (MALKLLTLIALTCAAANA) is a signal peptide. Transferrin-like domains follow at residues 23–364 (YKLC…ERGH) and 371–676 (VRLC…DVIS). 2 disulfides stabilise this stretch: C26–C60 and C35–C51. Fe(3+)-binding residues include D75 and Y108. Cystine bridges form between C132–C228, C181–C207, C204–C213, and C271–C284. Residues T134, R138, V140, and G141 each coordinate hydrogencarbonate. N218 is a glycosylation site (N-linked (GlcNAc...) asparagine). Y222 is a binding site for Fe(3+). The N-linked (GlcNAc...) asparagine glycan is linked to N355. Disulfide bonds link C374-C411 and C384-C402. The N-linked (GlcNAc...) asparagine glycan is linked to N418. 3 disulfides stabilise this stretch: C478/C551, C506/C678, and C579/C596.

The protein belongs to the transferrin family.

Its subcellular location is the secreted. Its function is as follows. Transferrins are iron binding transport proteins which bind Fe(3+) ion in association with the binding of an anion, usually bicarbonate. This transferrin binds only one Fe(3+) ion per protein molecule. The protein is Transferrin of Manduca sexta (Tobacco hawkmoth).